The primary structure comprises 294 residues: Casein kinase II subunit beta (294 aa).

2 disordered regions span residues 66–90 and 269–294; these read DHNT…SKRN and KRME…MASE. Residues 70–87 show a composition bias toward low complexity; sequence DNTTTNTSNNNDSRNGTS. Residues 273-288 are compositionally biased toward acidic residues; sequence EDDEEEEDEVEEEDDD.

Belongs to the casein kinase 2 subunit beta family. Tetramer composed of two alpha chains, one beta chain and one beta' chain. Phosphorylated by alpha subunit.

In terms of biological role, regulatory subunit of casein kinase II/CK2. As part of the kinase complex regulates the basal catalytic activity of the alpha subunit a constitutively active serine/threonine-protein kinase that phosphorylates a large number of substrates containing acidic residues C-terminal to the phosphorylated serine or threonine. This chain is Casein kinase II subunit beta (CKB1), found in Candida albicans (Yeast).